We begin with the raw amino-acid sequence, 513 residues long: Solute carrier family 2, facilitated glucose transporter member 10 (513 aa).

The Cytoplasmic segment spans residues 1–6 (MGCSVL). Residues 7 to 27 (LLTITVSTLGGLVFGYELGII) form a helical membrane-spanning segment. The Extracellular portion of the chain corresponds to 28-46 (SGALPQLQTHFSLGCVQQE). The helical transmembrane segment at 47 to 67 (AVVSALLIGSLFASIIGGWLI) threads the bilayer. Topologically, residues 68–80 (DRHGRRTSILLSN) are cytoplasmic. The helical transmembrane segment at 81–101 (LLILAGSVILTTGTSFFALVI) threads the bilayer. The Extracellular portion of the chain corresponds to 102-104 (GRA). Residues 105–125 (VIGFAMTVSSMSCCIFVSEMV) form a helical membrane-spanning segment. At 126–130 (TPERR) the chain is on the cytoplasmic side. The helical transmembrane segment at 131–151 (GLMVTLYEVGITVGILIAYAV) threads the bilayer. Residues 152-164 (NYIFNNVPLTGWR) lie on the Extracellular side of the membrane. A helical membrane pass occupies residues 165–185 (YMFGFAIIPSLIQLASIVLLP). Over 186 to 236 (KQAEVFVIHDDDSRQADRLTEETETSNQHQQSEKYGVSDLFKSKDNMRRRT) the chain is Cytoplasmic. A helical transmembrane segment spans residues 237 to 257 (VIGVGLVLSQQFTGQPNVLFY). A D-glucose-binding site is contributed by 246-247 (QQ). Topologically, residues 258–272 (ASTILFSVGFQSNAS) are extracellular. Asparagine 270 carries an N-linked (GlcNAc...) asparagine glycan. A helical transmembrane segment spans residues 273-293 (AILASVGFGIVKVIATLLAML). Residues 294-301 (CSDRAGRR) lie on the Cytoplasmic side of the membrane. A helical transmembrane segment spans residues 302 to 322 (SLLIGGCSMLAVGLILTGFLC). Over 323–376 (RQSVIDTTKRCTSVGPHSNLTLSAEHDEGVGFSSQTLDVHEHLRSFSQSEDIYK) the chain is Extracellular. The N-linked (GlcNAc...) asparagine glycan is linked to asparagine 341. Residues 377-397 (WIIFTCLMAVVSAFSVSFGPM) traverse the membrane as a helical segment. At 398 to 422 (TWVVLSEIFPKDIRGRAFSFINCFN) the chain is on the cytoplasmic side. A D-glucose-binding site is contributed by tryptophan 399. Helical transmembrane passes span 423–443 (VGAN…IGLS) and 444–464 (GVFL…YLVL). At 465–513 (PETKGKSLQDIDRELSQTRMIHRQELCSIFQRRRFSPGYQRVQLTSTAT) the chain is on the cytoplasmic side.

It belongs to the major facilitator superfamily. Sugar transporter (TC 2.A.1.1) family. Glucose transporter subfamily.

The protein resides in the endomembrane system. It is found in the cytoplasm. It localises to the perinuclear region. The enzyme catalyses D-glucose(out) = D-glucose(in). In terms of biological role, facilitative glucose transporter required for the development of the cardiovascular system. This is Solute carrier family 2, facilitated glucose transporter member 10 from Danio rerio (Zebrafish).